The primary structure comprises 570 residues: Proline--tRNA ligase (570 aa).

This sequence belongs to the class-II aminoacyl-tRNA synthetase family. ProS type 1 subfamily. In terms of assembly, homodimer.

The protein resides in the cytoplasm. It carries out the reaction tRNA(Pro) + L-proline + ATP = L-prolyl-tRNA(Pro) + AMP + diphosphate. In terms of biological role, catalyzes the attachment of proline to tRNA(Pro) in a two-step reaction: proline is first activated by ATP to form Pro-AMP and then transferred to the acceptor end of tRNA(Pro). As ProRS can inadvertently accommodate and process non-cognate amino acids such as alanine and cysteine, to avoid such errors it has two additional distinct editing activities against alanine. One activity is designated as 'pretransfer' editing and involves the tRNA(Pro)-independent hydrolysis of activated Ala-AMP. The other activity is designated 'posttransfer' editing and involves deacylation of mischarged Ala-tRNA(Pro). The misacylated Cys-tRNA(Pro) is not edited by ProRS. This Geotalea daltonii (strain DSM 22248 / JCM 15807 / FRC-32) (Geobacter daltonii) protein is Proline--tRNA ligase.